We begin with the raw amino-acid sequence, 482 residues long: Glutamate--tRNA ligase (482 aa).

The 'HIGH' region motif lies at 9-19 (PSPTGYLHIGG). Residues 252 to 256 (KLSKR) carry the 'KMSKS' region motif. Lysine 255 contributes to the ATP binding site.

This sequence belongs to the class-I aminoacyl-tRNA synthetase family. Glutamate--tRNA ligase type 1 subfamily. Monomer.

It localises to the cytoplasm. It catalyses the reaction tRNA(Glu) + L-glutamate + ATP = L-glutamyl-tRNA(Glu) + AMP + diphosphate. Functionally, catalyzes the attachment of glutamate to tRNA(Glu) in a two-step reaction: glutamate is first activated by ATP to form Glu-AMP and then transferred to the acceptor end of tRNA(Glu). The chain is Glutamate--tRNA ligase from Ureaplasma parvum serovar 3 (strain ATCC 27815 / 27 / NCTC 11736).